The sequence spans 307 residues: Transaldolase (307 aa).

K125 acts as the Schiff-base intermediate with substrate in catalysis.

Belongs to the transaldolase family. Type 1 subfamily. In terms of assembly, homodimer.

It localises to the cytoplasm. The catalysed reaction is D-sedoheptulose 7-phosphate + D-glyceraldehyde 3-phosphate = D-erythrose 4-phosphate + beta-D-fructose 6-phosphate. It functions in the pathway carbohydrate degradation; pentose phosphate pathway; D-glyceraldehyde 3-phosphate and beta-D-fructose 6-phosphate from D-ribose 5-phosphate and D-xylulose 5-phosphate (non-oxidative stage): step 2/3. Functionally, transaldolase is important for the balance of metabolites in the pentose-phosphate pathway. This is Transaldolase from Pseudomonas aeruginosa (strain LESB58).